A 194-amino-acid polypeptide reads, in one-letter code: MQDLTSAAAYYHQSMMMTTAKQNQPELPEQEQLKCPRCDSPNTKFCYYNNYNLSQPRHFCKNCRRYWTKGGALRNIPVGGGTRKSNKRSGSSPSSNLKNQTVAEKPDHHGSGSEEKEERVSGQEMNPTRMLYGLPVGDPNGASFSSLLASNMQMGGLVYESGSRWLPGMDLGLGSVRRSDDTWTDLAMNRMEKN.

A Dof-type zinc finger spans residues 33-87 (LKCPRCDSPNTKFCYYNNYNLSQPRHFCKNCRRYWTKGGALRNIPVGGGTRKSNK). Residues Cys35, Cys38, Cys60, and Cys63 each coordinate Zn(2+). Residues 74 to 125 (RNIPVGGGTRKSNKRSGSSPSSNLKNQTVAEKPDHHGSGSEEKEERVSGQEM) are disordered. Over residues 88 to 99 (RSGSSPSSNLKN) the composition is skewed to low complexity. The span at 104–121 (EKPDHHGSGSEEKEERVS) shows a compositional bias: basic and acidic residues.

It is found in the nucleus. Functionally, transcription factor that binds specifically to a 5'-AA[AG]G-3' consensus core sequence. This chain is Dof zinc finger protein DOF1.7 (DOF1.7), found in Arabidopsis thaliana (Mouse-ear cress).